A 199-amino-acid chain; its full sequence is Peroxiredoxin-1 (199 aa).

The Thioredoxin domain occupies 6–165; the sequence is AYIGKLAPDF…TLRLVQAFQF (160 aa). C52 serves as the catalytic Cysteine sulfenic acid (-SOH) intermediate.

This sequence belongs to the peroxiredoxin family. AhpC/Prx1 subfamily. In terms of assembly, homodimer; disulfide-linked, upon oxidation. 5 homodimers assemble to form a ring-like decamer. Interacts with GDPD5; forms a mixed-disulfide with GDPD5. Interacts with SESN1 and SESN2. Interacts with FAM107A. In terms of processing, the enzyme can be inactivated by further oxidation of the cysteine sulfenic acid (C(P)-SOH) to sulphinic acid (C(P)-SO2H) instead of its condensation to a disulfide bond. It can be reactivated by forming a transient disulfide bond with sulfiredoxin SRXN1, which reduces the cysteine sulfinic acid in an ATP- and Mg-dependent manner.

It localises to the cytoplasm. The catalysed reaction is a hydroperoxide + [thioredoxin]-dithiol = an alcohol + [thioredoxin]-disulfide + H2O. Functionally, thiol-specific peroxidase that catalyzes the reduction of hydrogen peroxide and organic hydroperoxides to water and alcohols, respectively. Plays a role in cell protection against oxidative stress by detoxifying peroxides and as sensor of hydrogen peroxide-mediated signaling events. Might participate in the signaling cascades of growth factors and tumor necrosis factor-alpha by regulating the intracellular concentrations of H(2)O(2). Reduces an intramolecular disulfide bond in GDPD5 that gates the ability to GDPD5 to drive postmitotic motor neuron differentiation. The protein is Peroxiredoxin-1 (PRDX1) of Gekko japonicus (Schlegel's Japanese gecko).